We begin with the raw amino-acid sequence, 143 residues long: Large ribosomal subunit protein uL11 (143 aa).

The protein belongs to the universal ribosomal protein uL11 family. Part of the ribosomal stalk of the 50S ribosomal subunit. Interacts with L10 and the large rRNA to form the base of the stalk. L10 forms an elongated spine to which L12 dimers bind in a sequential fashion forming a multimeric L10(L12)X complex. Post-translationally, one or more lysine residues are methylated.

Functionally, forms part of the ribosomal stalk which helps the ribosome interact with GTP-bound translation factors. This Rhizobium etli (strain ATCC 51251 / DSM 11541 / JCM 21823 / NBRC 15573 / CFN 42) protein is Large ribosomal subunit protein uL11.